The sequence spans 915 residues: Translation initiation factor IF-2 (915 aa).

Disordered stretches follow at residues Met1 to Thr105 and Val121 to Ile295. Residues Pro57 to Gly81 are compositionally biased toward low complexity. Gly residues predominate over residues Arg84–Gly101. 2 stretches are compositionally biased toward basic and acidic residues: residues Val121–Lys135 and Glu143–Ala180. Positions Ala186–Ala195 are enriched in pro residues. Low complexity-rich tracts occupy residues Ala201–Ala213 and Lys230–Pro239. Residues Arg243 to Lys256 show a composition bias toward basic and acidic residues. The span at Pro266–Lys278 shows a compositional bias: low complexity. Residues Ala279–Ile295 show a composition bias toward basic and acidic residues. Residues Pro414–Lys584 form the tr-type G domain. The G1 stretch occupies residues Gly423–Thr430. GTP is bound at residue Gly423–Thr430. The tract at residues Gly448 to His452 is G2. The segment at Asp470–Gly473 is G3. GTP contacts are provided by residues Asp470–His474 and Asn524–Asp527. Residues Asn524–Asp527 are G4. Residues Ser560 to Leu562 are G5.

It belongs to the TRAFAC class translation factor GTPase superfamily. Classic translation factor GTPase family. IF-2 subfamily.

Its subcellular location is the cytoplasm. In terms of biological role, one of the essential components for the initiation of protein synthesis. Protects formylmethionyl-tRNA from spontaneous hydrolysis and promotes its binding to the 30S ribosomal subunits. Also involved in the hydrolysis of GTP during the formation of the 70S ribosomal complex. The polypeptide is Translation initiation factor IF-2 (Granulibacter bethesdensis (strain ATCC BAA-1260 / CGDNIH1)).